Reading from the N-terminus, the 253-residue chain is GTP cyclohydrolase III (253 aa).

Belongs to the archaeal-type GTP cyclohydrolase family.

It catalyses the reaction GTP + 3 H2O = 2-amino-5-formylamino-6-(5-phospho-D-ribosylamino)pyrimidin-4(3H)-one + 2 phosphate + 2 H(+). Its function is as follows. Catalyzes the formation of 2-amino-5-formylamino-6-ribofuranosylamino-4(3H)-pyrimidinone ribonucleotide monophosphate and inorganic phosphate from GTP. Also has an independent pyrophosphate phosphohydrolase activity. The sequence is that of GTP cyclohydrolase III from Natronomonas pharaonis (strain ATCC 35678 / DSM 2160 / CIP 103997 / JCM 8858 / NBRC 14720 / NCIMB 2260 / Gabara) (Halobacterium pharaonis).